We begin with the raw amino-acid sequence, 427 residues long: MTTAPAISSRLDDPESARETGRAKIDWAFEHMPILSALREEFDANQPLAGETIGMAMHVEAKTAALVETMADAGAEIAITGCNPLSTHDGVSAALDAHESITSYAERGAEGEAYYDAIDAVLAHEPTVTVDDGGDLVFRVHEDHPELIDTIIGGTEETTTGVHRLRAMDDDDALEYPVFAVNDTPMKRLFDNVHGTGESALANIAMTTNLSWAGKDVVVAGYGDCGRGVAKKAAGQNANVIVTEVEPRRALEAHMEGYDVMPMAEAAEVGDVFLTTTGNKNVITRAHFERMDDGVVLANAGHFDVEVNLDHLSELAVSEREAREGVREYELADGRRLNVLAEGRLVNLASPIGLGHPVGVMDQSFGVQAVCVRELVANREEYAAGVHNVPDELDIEIAEIKLAAEGVEYDALTDDQAEYMDSWQHGT.

Substrate-binding residues include Asp132 and Glu157. 158 to 160 (TTT) serves as a coordination point for NAD(+). Substrate-binding residues include Lys187 and Asp191. NAD(+) contacts are provided by residues Asn192, 221-226 (GYGDCG), Glu244, Asn279, 300-302 (AGH), and Asn347.

The protein belongs to the adenosylhomocysteinase family. The cofactor is NAD(+).

The protein resides in the cytoplasm. It carries out the reaction S-adenosyl-L-homocysteine + H2O = L-homocysteine + adenosine. It participates in amino-acid biosynthesis; L-homocysteine biosynthesis; L-homocysteine from S-adenosyl-L-homocysteine: step 1/1. Its function is as follows. May play a key role in the regulation of the intracellular concentration of adenosylhomocysteine. In Halobacterium salinarum (strain ATCC 29341 / DSM 671 / R1), this protein is Adenosylhomocysteinase.